The chain runs to 105 residues: Putative thioredoxin-5 (105 aa).

One can recognise a Thioredoxin domain in the interval 1-104; it reads MYKEPKNESE…VALENMVKKL (104 aa). Active-site nucleophile residues include Cys30 and Cys33. A disulfide bridge connects residues Cys30 and Cys33.

Belongs to the thioredoxin family.

Functionally, participates in various redox reactions through the reversible oxidation of its active center dithiol to a disulfide and catalyzes dithiol-disulfide exchange reactions. This chain is Putative thioredoxin-5 (trxE), found in Dictyostelium discoideum (Social amoeba).